Here is a 229-residue protein sequence, read N- to C-terminus: Platelet-activating factor acetylhydrolase IB subunit alpha2 (229 aa).

Ser-2 bears the N-acetylserine mark. Ser-2 carries the phosphoserine modification. Residue Ser-48 is part of the active site. Ser-64 is modified (phosphoserine). Active-site residues include Asp-193 and His-196. The residue at position 220 (Thr-220) is a Phosphothreonine.

It belongs to the 'GDSL' lipolytic enzyme family. Platelet-activating factor acetylhydrolase IB beta/gamma subunits subfamily. As to quaternary structure, forms a catalytic dimer which is either homodimer (alpha2/alpha2 homodimer) or heterodimer with PAFAH1B3 (alpha2/alpha1 heterodimer). Component of the cytosolic (PAF-AH (I)) heterotetrameric enzyme, which is composed of PAFAH1B1 (beta), PAFAH1B2 (alpha2) and PAFAH1B3 (alpha1) subunits. The catalytic activity of the enzyme resides in the alpha1 (PAFAH1B3) and alpha2 (PAFAH1B2) subunits, whereas the beta subunit (PAFAH1B1) has regulatory activity. Trimer formation is not essential for the catalytic activity. Interacts (homodimer form) with PAFAH1B1 (homodimer form); PAFAH1B2 competes with NDEL1 for PAFAH1B1 binding. Interacts with VLDLR; this interaction may modulate the Reelin pathway.

It is found in the cytoplasm. The catalysed reaction is a 1-O-alkyl-2-acetyl-sn-glycero-3-phosphocholine + H2O = a 1-O-alkyl-sn-glycero-3-phosphocholine + acetate + H(+). It carries out the reaction 1-O-hexadecyl-2-acetyl-sn-glycero-3-phosphocholine + H2O = 1-O-hexadecyl-sn-glycero-3-phosphocholine + acetate + H(+). The enzyme catalyses 1-O-hexadecyl-2-acetyl-sn-glycero-3-phosphate + H2O = 1-O-hexadecyl-sn-glycero-3-phosphate + acetate + H(+). It catalyses the reaction 1-O-hexadecyl-2-acetyl-sn-glycero-3-phosphoethanolamine + H2O = 1-O-hexadecyl-sn-glycero-3-phosphoethanolamine + acetate + H(+). Beta subunit (PAFAH1B1) stimulates the acetylhydrolase activity of the alpha2/alpha2 catalytic homodimer. Alpha2 catalytic subunit of the cytosolic type I platelet-activating factor (PAF) acetylhydrolase (PAF-AH (I)) heterotetrameric enzyme that catalyzes the hydrolyze of the acetyl group at the sn-2 position of PAF and its analogs and modulates the action of PAF. The activity and substrate specificity of PAF-AH (I) are affected by its subunit composition. The alpha2/alpha2 homodimer (PAFAH1B2/PAFAH1B2 homodimer) hydrolyzes PAF and 1-O-alkyl-2-acetyl-sn-glycero-3-phosphorylethanolamine (AAGPE) more efficiently than 1-O-alkyl-2-acetyl-sn-glycero-3-phosphoric acid (AAGPA). In contrast, the alpha1/alpha2 heterodimer(PAFAH1B3/PAFAH1B3 heterodimer) hydrolyzes AAGPA more efficiently than PAF, but has little hydrolytic activity towards AAGPE. May play a role in male germ cell meiosis during the late pachytenestage and meiotic divisions as well as early spermiogenesis. The polypeptide is Platelet-activating factor acetylhydrolase IB subunit alpha2 (Mus musculus (Mouse)).